An 87-amino-acid polypeptide reads, in one-letter code: Toxin CsEv2 (87 aa).

The first 19 residues, 1–19 (MNSLLIITACLFLIGTVWA), serve as a signal peptide directing secretion. In terms of domain architecture, LCN-type CS-alpha/beta spans 20 to 85 (KEGYLVNKST…TYPLPNKSCS (66 aa)). Disulfide bonds link cysteine 31/cysteine 84, cysteine 35/cysteine 60, cysteine 44/cysteine 65, and cysteine 48/cysteine 67.

This sequence belongs to the long (4 C-C) scorpion toxin superfamily. Sodium channel inhibitor family. Beta subfamily. Expressed by the venom gland.

It is found in the secreted. Functionally, beta toxins bind voltage-independently at site-4 of sodium channels (Nav) and shift the voltage of activation toward more negative potentials thereby affecting sodium channel activation and promoting spontaneous and repetitive firing. Induces immediate paralysis in crickets after injection, with a total paralysis occurring within 15-30 minutes and lasting for 1-2 hours. Is also lethal to vertebrate (chicks) when injected in very high dosages (more that 100 mg/kg). In Centruroides sculpturatus (Arizona bark scorpion), this protein is Toxin CsEv2.